The chain runs to 500 residues: NAD(P)H-quinone oxidoreductase chain 4, chloroplastic (500 aa).

The next 14 membrane-spanning stretches (helical) occupy residues 4–24, 35–55, 87–107, 113–130, 134–154, 167–187, 211–231, 242–262, 272–292, 305–325, 330–350, 386–406, 416–436, and 462–482; these read FPWL…MLFL, YTIC…CYNF, IGTI…AFPV, LFHF…GSFS, LLLF…LLSM, FILY…GISL, ILFY…IPLH, HYST…YGLV, AHSM…IYAA, IAYS…SITD, GAIL…FLAG, LALP…GIIT, ILII…LLSM, and LFLS…PDFV.

It belongs to the complex I subunit 4 family.

The protein localises to the plastid. It is found in the chloroplast thylakoid membrane. It catalyses the reaction a plastoquinone + NADH + (n+1) H(+)(in) = a plastoquinol + NAD(+) + n H(+)(out). It carries out the reaction a plastoquinone + NADPH + (n+1) H(+)(in) = a plastoquinol + NADP(+) + n H(+)(out). In Nasturtium officinale (Watercress), this protein is NAD(P)H-quinone oxidoreductase chain 4, chloroplastic.